A 257-amino-acid polypeptide reads, in one-letter code: Cobalt transport protein CbiM (257 aa).

A signal peptide spans 1–33 (MVKPTQAKRYASLGAIALLTTSLVVASPNPALA). Helical transmembrane passes span 39-59 (GFLP…FLAW), 74-94 (SVLL…LKIP), 117-137 (LMAV…AHGG), 138-158 (LTTL…LAWL), 171-191 (AIAL…LTSL), and 214-234 (LFAV…VLVW).

It belongs to the CbiM family. Forms an energy-coupling factor (ECF) transporter complex composed of an ATP-binding protein (A component, CbiO), a transmembrane protein (T component, CbiQ) and 2 possible substrate-capture proteins (S components, CbiM and CbiN) of unknown stoichimetry.

The protein resides in the cell inner membrane. It participates in cofactor biosynthesis; adenosylcobalamin biosynthesis. Its function is as follows. Part of the energy-coupling factor (ECF) transporter complex CbiMNOQ involved in cobalt import. The chain is Cobalt transport protein CbiM from Thermosynechococcus vestitus (strain NIES-2133 / IAM M-273 / BP-1).